The primary structure comprises 228 residues: Extracellular protease inhibitor 10 (228 aa).

Positions 1–22 are cleaved as a signal peptide; sequence MKSAFTLSLALVAVTATISAAA. 3 Kazal-like domains span residues 23–72, 90–127, and 156–208; these read DDNC…ECAS, TSGTVGCPDMCLDVYDPVSDENGKEYSNQCYMEMAKCK, and GYQG…EGTL. Residue asparagine 25 is glycosylated (N-linked (GlcNAc...) asparagine). Cystine bridges form between cysteine 26–cysteine 56, cysteine 30–cysteine 49, and cysteine 38–cysteine 70. A disordered region spans residues 69-92; sequence ECASTPASSATPSPVTSSTGSTSG. Over residues 71–92 the composition is skewed to low complexity; the sequence is ASTPASSATPSPVTSSTGSTSG. Intrachain disulfides connect cysteine 96–cysteine 126, cysteine 100–cysteine 119, cysteine 162–cysteine 193, and cysteine 167–cysteine 186. Asparagine 199 is a glycosylation site (N-linked (GlcNAc...) asparagine).

Interacts with host subtilisin-like protease P69B.

It is found in the secreted. In terms of biological role, secreted effector that interacts with and inhibits the pathogenesis-related P69B subtilisin-like serine protease of host tomato. Inhibition of host proteases by a pathogen extracellular protease inhibitor forms a specific type of defense-counterdefense mechanism between plants and microbial pathogens. This is Extracellular protease inhibitor 10 from Phytophthora infestans (strain T30-4) (Potato late blight agent).